We begin with the raw amino-acid sequence, 2465 residues long: Protein DOP1A (2465 aa).

Disordered regions lie at residues 559-600 (PSGQ…SSES), 625-646 (GAAA…TVGS), and 705-733 (TEHQ…KEKN). Residues 633–646 (STSSETETASTVGS) show a composition bias toward low complexity. A compositionally biased stretch (basic and acidic residues) spans 707-733 (HQGDLGREQGETSKWDRNSQGDVKEKN). Ser1266 is modified (phosphoserine). Composition is skewed to basic and acidic residues over residues 1282–1291 (EKETIVKESG) and 1305–1315 (KKDDDKKKSSN). Residues 1282-1315 (EKETIVKESGKQPGAKPKVKLARKKDDDKKKSSN) are disordered.

It belongs to the DOP1 family.

The protein localises to the golgi apparatus membrane. In terms of biological role, may be involved in protein traffic between late Golgi and early endosomes. The polypeptide is Protein DOP1A (Homo sapiens (Human)).